The chain runs to 144 residues: Ribosomally synthesized cyclic peptide phomopsin precursor phomA' (144 aa).

An N-terminal signal peptide occupies residues 1 to 18 (MRFTPAIVIAAFCSLAVA). Propeptides lie at residues 19–35 (APAAKAIARSPSEAVED), 42–50 (KKRGEAVED), 57–65 (KKRGEAVED), 72–79 (KRGEAVED), 86–94 (KKRGEAVED), 101–108 (KRGEAVED), 115–123 (KKRGEAVED), 130–137 (KRGEAVED), and Lys-144.

Post-translationally, phomA' is processed by several endopeptidases including kexin proteases as well as the cluster-specific S41 family peptidase phomP1' and the peptidase phomG' to produce 5 identical copies of the hexapeptide Tyr-Val-Ile-Pro-Ile-Asp and 3 identical copies of Tyr-Val-Ile-Pro-Phe-Asp, that are further modified into phomapsins A and P, respectively. The timing and order of proteolysis of the phomA' precursor and PTMs are still unknown. Two tyrosinase-like enzyme phomQ1' and PhomQ2, catalyze the chlorination and hydroxylation of Tyr, respectively. PhomYb', is proposed to be involved in the construction of the macrocyclic structure. The other four ustYa family proteins may be involved in PTMs that generate the unique structure of phomopsin A. PhomYa' is required for the hydroxylation of C-beta of Tyr. PhomYc', PhomYd', and PhomYe' are responsible for the biosynthesis of 2,3-dehydroisoleucine (dIle), 2,3-dehydroaspartic acid (dAsp), and 3,4-dehydroproline (dPro), respectively. While dIle formation by phomYc is indispensable for the installation of dAsp by phomYd, the order of the other PTMs have not been elucidated yet. Most of the biosynthetic enzymes likely have broad substrate specificity, and thus, there might be a metabolic grid from a precursor to phomopsin A. The enzyme(s) responsible for the biosynthesis of 3,4-dehydrovaline (dVal) have also not been identified yet. Finally, PhomM' acts as an S-adenosylmethionine-dependent alpha-N-methyltransferase that catalyzes two successive N-methylation reactions, converting N-desmethyl-phomopsin A to phomopsin A and phomopsin A further to an N,N-dimethylated congener called phomopsin E.

Its pathway is mycotoxin biosynthesis. In terms of biological role, ribosomally synthesized cyclic peptide phomopsin precursor; part of the gene cluster that mediates the biosynthesis of the phomopsins, a group of hexapeptide mycotoxins which infects lupins and causes lupinosis disease in livestock. The phomA' translated product contains a 5-fold repeated peptide embedding the hexapeptide Tyr-Val-Ile-Pro-Ile-Asp and a 3-fold repeated peptide embedding the hexapeptide Tyr-Val-Ile-Pro-Phe-Asp, that is converted into phomapsin A and phomapsin P, respectively. After being excised from the precursor peptide by kexin proteases, the core peptides are cyclized and modified post-translationally by enzymes encoded within the corresponding gene cluster. This is Ribosomally synthesized cyclic peptide phomopsin precursor phomA' from Diaporthe leptostromiformis (Lupinosis disease fungus).